An 818-amino-acid chain; its full sequence is Sodium/hydrogen exchanger 1 (818 aa).

Topologically, residues 1–98 (MLLWSGICGL…FPVLGIDYTH (98 aa)) are extracellular. Positions 39–76 (PSPTASTIRGSEPPRERSIGDVTTAPPELAPESRPVNH) are disordered. N-linked (GlcNAc...) asparagine glycosylation occurs at Asn-75. A helical transmembrane segment spans residues 99–121 (VRTPFEISLWILLACLMKIGFHV). At 122-130 (IPTISSIVP) the chain is on the cytoplasmic side. The chain crosses the membrane as a helical span at residues 131-148 (ESCLLIVVGLLVGGLIKA). At 149–158 (VGETPPFLQS) the chain is on the extracellular side. The chain crosses the membrane as a helical span at residues 159-176 (EVFFLFLLPPIILDAGYF). The Cytoplasmic segment spans residues 177–186 (LPLRQFTENL). A helical transmembrane segment spans residues 187–215 (GTILIFAVVGTLWNAFFLGGLMYAVCLVG). At 216–222 (GEQINNI) the chain is on the extracellular side. A helical transmembrane segment spans residues 223–249 (GLLDNLLFGSIISAVDPVAVLAVFEEI). Over 250–252 (HIN) the chain is Cytoplasmic. Residues 253-283 (ELLHILVFGESLLNDAVTVVLYHLFEEFANY) form a helical membrane-spanning segment. The Extracellular portion of the chain corresponds to 284 to 287 (DRVG). A helical membrane pass occupies residues 288–322 (IVDIVLGFLSFFVVSLGGVFVGVVYGVIAAFTSRF). Topologically, residues 323-328 (TSHIRV) are cytoplasmic. A helical transmembrane segment spans residues 329-341 (IEPLFVFLYSYMA). Topologically, residues 342–350 (YLSAELFHL) are extracellular. The chain crosses the membrane as a helical span at residues 351 to 371 (SGIMALIASGVVMRPYVEANI). Over 372-373 (SH) the chain is Cytoplasmic. The helical transmembrane segment at 374–404 (KSHTTIKYFLKMWSSVSETLIFIFLGVSTVA) threads the bilayer. At 405–410 (GSHHWN) the chain is on the extracellular side. The chain crosses the membrane as a helical span at residues 411–438 (WTFVISTLLFCLIARVLGVLGLTWFINK). The Cytoplasmic segment spans residues 439 to 444 (FRIVKL). A helical transmembrane segment spans residues 445-469 (TPKDQFIIAYGGLRGAIAFSLGHLL). The Extracellular segment spans residues 470 to 475 (DKNHFP). Residues 476–505 (MCDLFLTAIITVIFFTVFVQGMTIRPLVDL) form a helical membrane-spanning segment. Positions 503-545 (VDLLAVKKKQETKRSINEEIHTQFLDHLLTGIEDICGHYGHHH) are interaction with TESC. At 506–818 (LAVKKKQETK…EGEPFIPKGQ (313 aa)) the chain is on the cytoplasmic side. Positions 509–516 (KKKQETKR) are PI(4,5)P2-binding region. The interaction with CHP2 stretch occupies residues 515–545 (KRSINEEIHTQFLDHLLTGIEDICGHYGHHH). The segment at 540 to 545 (HYGHHH) is confers pH-dependent PI(4,5)P2 binding. The tract at residues 552–560 (RFNKKYVKK) is PI(4,5)P2-binding region. 2 positions are modified to phosphoserine: Ser-599 and Ser-602. Thr-603 carries the phosphothreonine modification. Phosphoserine is present on residues Ser-605 and Ser-648. Residues 633-818 (KILRNNLQKT…EGEPFIPKGQ (186 aa)) are interaction with TESC. The interval 633–818 (KILRNNLQKT…EGEPFIPKGQ (186 aa)) is interaction with CALM1. The segment at 684–687 (LTVP) is interaction with PPP3CA. Phosphoserine occurs at positions 693, 697, and 703. Residues 715–720 (PVITID) form an interaction with PPP3CA region. 3 positions are modified to phosphoserine: Ser-723, Ser-726, and Ser-729. Positions 739–818 (GKVLGLSREP…EGEPFIPKGQ (80 aa)) are disordered. A phosphothreonine mark is found at Thr-752 and Thr-782. The span at 785-794 (PSDSPSSQRI) shows a compositional bias: polar residues. Phosphoserine occurs at positions 788, 790, and 799.

It belongs to the monovalent cation:proton antiporter 1 (CPA1) transporter (TC 2.A.36) family. As to quaternary structure, homodimer; dimerization is crucial for its function. Oligomer. Interacts with CALM in a calcium-dependent manner. Interacts with TESC. Interacts (via the juxtamembrane region of the cytoplasmic C-terminal domain) with CHP1; the interaction occurs at the plasma membrane in a calcium-dependent manner. Interacts with CHP2; the interaction occurs in a calcium-dependent manner. Interacts with EZR; regulates the cytoskeletal interactions of SLC9A1 and promotes stress fiber formation. Post-translationally, ubiquitinated, leading to its degradation by the proteasome. Ubiquitination is reduced by CHP1. O-glycosylated. In terms of processing, palmitoylated; may play a major role in SLC9A1 regulation. Post-translationally, phosphorylation at Thr-782 increases SLC9A1 activity. Specifically dephosphorylated at Thr-782 by PPP3CA that negatively regulates SLC9A1 activity. Phosphorylation at Ser-648 by AKT1 reduces SLC9A1 binding to CALM1.

The protein localises to the cell membrane. It is found in the basolateral cell membrane. It carries out the reaction Na(+)(in) + H(+)(out) = Na(+)(out) + H(+)(in). The catalysed reaction is Li(+)(out) + H(+)(in) = Li(+)(in) + H(+)(out). The enzyme catalyses Li(+)(in) + Na(+)(out) = Li(+)(out) + Na(+)(in). Activated at acidic pHs. Inhibited by cariporide and eniporide. Inhibited by amiloride and 5-amino-substituted derivatives. Phosphatidylinositol 4,5-bisphosphate (PI(4,5)P2) and phosphatidylinositol 3,4,5-trisphosphate (PI(3,4,5)P3) bind and differentially regulate SLC9A1 activity. Functionally, electroneutral Na(+) /H(+) antiporter that extrudes Na(+) in exchange for external protons driven by the inward sodium ion chemical gradient, protecting cells from acidification that occurs from metabolism. Exchanges intracellular H(+) ions for extracellular Na(+) in 1:1 stoichiometry. Plays a key role in maintening intracellular pH neutral and cell volume, and thus is important for cell growth, proliferation, migration and survival. In addition, can transport lithium Li(+) and also functions as a Na(+)/Li(+) antiporter. SLC9A1 also functions in membrane anchoring and organization of scaffolding complexes that coordinate signaling inputs. The protein is Sodium/hydrogen exchanger 1 (SLC9A1) of Sus scrofa (Pig).